Reading from the N-terminus, the 248-residue chain is Oligo(A)/oligo(T)-binding protein (248 aa).

Residues 1–36 mediate DNA binding; that stretch reads MAKTLAQGRKPGSGRKPGKGKTLREGRKPGSGRRRR. Disordered stretches follow at residues 1–127 and 219–248; these read MAKT…LQQQ and TAASNQPRTQPSPAAHITKNSDSTEKNATI. A run of 3 repeats spans residues 8–12, 14–18, and 26–30. The segment at 8 to 30 is 3 X 5 AA repeats of G-R-K-P-G; the sequence is GRKPGSGRKPGKGKTLREGRKPG. A compositionally biased stretch (basic residues) spans 12–21; that stretch reads GSGRKPGKGK. A compositionally biased stretch (basic and acidic residues) spans 37-71; sequence QDTGGKETDGSQQDQESRLISSRDMEAVDALRELT. Composition is skewed to low complexity over residues 72 to 100 and 111 to 127; these read HSPSSHSAHNSSAAPPPHAAAASTSLPPS and QQQQQQQQQQQQLLQQQ.

Binds as a dimer or higher oligomer.

In terms of biological role, DNA-binding protein that recognizes oligo(A).oligo(T) tracts (A.T DNA). Can bind to any 11 bp sequence in which 10 bases conform to an uninterrupted oligo(A).oligo(T) tract. The chain is Oligo(A)/oligo(T)-binding protein (DAT1) from Saccharomyces cerevisiae (strain ATCC 204508 / S288c) (Baker's yeast).